A 329-amino-acid polypeptide reads, in one-letter code: uncharacterized protein (329 aa).

An SIS domain is found at 38-184 (IVKLILKSQE…MACLMRAKNF (147 aa)). Residue 56-61 (GVGKSA) participates in ATP binding. CBS domains follow at residues 211–267 (QTTN…GLSL) and 276–329 (TLKP…GLKA).

The protein belongs to the SIS family. GutQ/KpsF subfamily.

This is an uncharacterized protein from Helicobacter pylori (strain J99 / ATCC 700824) (Campylobacter pylori J99).